Here is a 508-residue protein sequence, read N- to C-terminus: MNTELTSRADAPLVLILGLGETGVAAARWCAREGARLRVADTRMQPGGLEGLRAVLQEAQVEYHLGCGSHFDPALLDGVTQLVLSPGLAPGQEPAASLLAAAVSRGIEVLGEVELFARALASLAEARAYHPRLLAVTGTNGKTTVTALTRQLIEACGLSARAAGNISPAALASLMEALDQDALPDVWVLELSSFQLETTHSLQADAAVVLNVTQDHLDWHGDMQAYAQAKARLLKMARVAIVNRDDPLTLAMVADVNGLNVRSFGRDLPQRVGDMGLELGQGVAWLVACEPSDFDEPVVRRKKDAPPPQRGEGRMSRLMPVDALRIRGVHNALNALAALQLARVLELGWGPMLRALRDYAGEPHRAAFVRSIGGVDYINDSKGTNVGATVAALEGLGQTVVLIAGGQGKGQDFSPLRSAVSRHARAVVLIGADGPAIGQVLESTGVALVVAADMREAVRRAAEIAQAGEAVLLSPACASLDMYRNYPHRGQVFVEEVEELALDRGEVL.

138-144 (GTNGKTT) serves as a coordination point for ATP.

The protein belongs to the MurCDEF family.

Its subcellular location is the cytoplasm. It carries out the reaction UDP-N-acetyl-alpha-D-muramoyl-L-alanine + D-glutamate + ATP = UDP-N-acetyl-alpha-D-muramoyl-L-alanyl-D-glutamate + ADP + phosphate + H(+). The protein operates within cell wall biogenesis; peptidoglycan biosynthesis. In terms of biological role, cell wall formation. Catalyzes the addition of glutamate to the nucleotide precursor UDP-N-acetylmuramoyl-L-alanine (UMA). In Bordetella avium (strain 197N), this protein is UDP-N-acetylmuramoylalanine--D-glutamate ligase.